We begin with the raw amino-acid sequence, 264 residues long: MRVIMGIASLGFLWAVFLLPLVFGVPTEETTFGESVASHLPKGCRRCCDPEDLMSSDDTVQAPVSPYVLPEVRPYINITILKGDKGDRGPTGTPGKPGKNGTRGDRGSQGVKGDKGQAGSPGSSCQTHYSAFSVGRKTGLHSSENFLSLLFDRVFVNTDGHFDMATGSFVAPLRGLYFFSLNVHSWNYKETYVHIVHNEQAVVILYAQPSERSIMQSQSVMLPLVPGDRVWVRLFKRERENGIYSDDVDTYITFSGHLIKAEDN.

The signal sequence occupies residues 1-24 (MRVIMGIASLGFLWAVFLLPLVFG). The N-linked (GlcNAc...) asparagine glycan is linked to asparagine 77. The interval 81–125 (LKGDKGDRGPTGTPGKPGKNGTRGDRGSQGVKGDKGQAGSPGSSC) is disordered. The region spanning 83 to 124 (GDKGDRGPTGTPGKPGKNGTRGDRGSQGVKGDKGQAGSPGSS) is the Collagen-like domain. Residues 90–100 (PTGTPGKPGKN) show a composition bias toward low complexity. The C1q domain occupies 125-264 (CQTHYSAFSV…SGHLIKAEDN (140 aa)).

It localises to the secreted. The sequence is that of Complement C1q tumor necrosis factor-related protein 6 (C1qtnf6) from Mus musculus (Mouse).